A 330-amino-acid chain; its full sequence is DNA-directed RNA polymerase subunit alpha (330 aa).

Residues 1–231 (MQTNLLKPKT…EQLAVFAQLE (231 aa)) are alpha N-terminal domain (alpha-NTD). The tract at residues 250–330 (FDPILLRPVD…NWPPAGLDKR (81 aa)) is alpha C-terminal domain (alpha-CTD).

It belongs to the RNA polymerase alpha chain family. As to quaternary structure, homodimer. The RNAP catalytic core consists of 2 alpha, 1 beta, 1 beta' and 1 omega subunit. When a sigma factor is associated with the core the holoenzyme is formed, which can initiate transcription.

The catalysed reaction is RNA(n) + a ribonucleoside 5'-triphosphate = RNA(n+1) + diphosphate. DNA-dependent RNA polymerase catalyzes the transcription of DNA into RNA using the four ribonucleoside triphosphates as substrates. The sequence is that of DNA-directed RNA polymerase subunit alpha from Paracidovorax citrulli (strain AAC00-1) (Acidovorax citrulli).